The sequence spans 164 residues: Crossover junction endodeoxyribonuclease RuvC (164 aa).

Active-site residues include Asp7, Glu67, and Asp140. Positions 7, 67, and 140 each coordinate Mg(2+).

This sequence belongs to the RuvC family. In terms of assembly, homodimer which binds Holliday junction (HJ) DNA. The HJ becomes 2-fold symmetrical on binding to RuvC with unstacked arms; it has a different conformation from HJ DNA in complex with RuvA. In the full resolvosome a probable DNA-RuvA(4)-RuvB(12)-RuvC(2) complex forms which resolves the HJ. Mg(2+) serves as cofactor.

The protein localises to the cytoplasm. It catalyses the reaction Endonucleolytic cleavage at a junction such as a reciprocal single-stranded crossover between two homologous DNA duplexes (Holliday junction).. Functionally, the RuvA-RuvB-RuvC complex processes Holliday junction (HJ) DNA during genetic recombination and DNA repair. Endonuclease that resolves HJ intermediates. Cleaves cruciform DNA by making single-stranded nicks across the HJ at symmetrical positions within the homologous arms, yielding a 5'-phosphate and a 3'-hydroxyl group; requires a central core of homology in the junction. The consensus cleavage sequence is 5'-(A/T)TT(C/G)-3'. Cleavage occurs on the 3'-side of the TT dinucleotide at the point of strand exchange. HJ branch migration catalyzed by RuvA-RuvB allows RuvC to scan DNA until it finds its consensus sequence, where it cleaves and resolves the cruciform DNA. In Pelotomaculum thermopropionicum (strain DSM 13744 / JCM 10971 / SI), this protein is Crossover junction endodeoxyribonuclease RuvC.